We begin with the raw amino-acid sequence, 143 residues long: Transcriptional regulator MraZ (143 aa).

SpoVT-AbrB domains lie at 5-47 (TYTP…PRAA) and 76-119 (TDEQ…DAQA).

This sequence belongs to the MraZ family. In terms of assembly, forms oligomers.

It localises to the cytoplasm. It is found in the nucleoid. In Mycobacterium bovis (strain ATCC BAA-935 / AF2122/97), this protein is Transcriptional regulator MraZ.